We begin with the raw amino-acid sequence, 525 residues long: GMP synthase [glutamine-hydrolyzing] (525 aa).

The Glutamine amidotransferase type-1 domain occupies 9–207 (RILILDFGSQ…VRDICQCEAL (199 aa)). Cysteine 86 acts as the Nucleophile in catalysis. Catalysis depends on residues histidine 181 and glutamate 183. Positions 208-400 (WTPAKIIDDA…LGLPYDMLYR (193 aa)) constitute a GMPS ATP-PPase domain. Residue 235–241 (SGGVDSS) participates in ATP binding.

In terms of assembly, homodimer.

The catalysed reaction is XMP + L-glutamine + ATP + H2O = GMP + L-glutamate + AMP + diphosphate + 2 H(+). It functions in the pathway purine metabolism; GMP biosynthesis; GMP from XMP (L-Gln route): step 1/1. In terms of biological role, catalyzes the synthesis of GMP from XMP. In Salmonella typhi, this protein is GMP synthase [glutamine-hydrolyzing].